A 1501-amino-acid chain; its full sequence is Neither inactivation nor afterpotential protein C (1501 aa).

The Protein kinase domain occupies 16–282; the sequence is FEIYEEIAQG…MVEMVEHPFL (267 aa). ATP contacts are provided by residues 22–30 and lysine 45; that span reads IAQGVNAKV. Aspartate 145 functions as the Proton acceptor in the catalytic mechanism. Serine 183 is subject to Phosphoserine. A Myosin motor domain is found at 332–1037; sequence MYPEDLAALE…FLARLYELQV (706 aa). The actin-binding stretch occupies residues 913-934; that stretch reads LTLLKMLSQNANLGVHFVRCIR. 2 IQ domains span residues 1036–1065 and 1072–1101; these read QVKK…FKLG and HDVA…EKSG. Residues 1043–1271 form an interaction with rtp region; sequence VQSMMRALLA…RMGESDNIYN (229 aa). The non alpha-helical, C-terminal domain stretch occupies residues 1066–1501; sequence KKGPEHHDVA…ITLSGYAVDI (436 aa). Disordered regions lie at residues 1308–1364 and 1390–1473; these read NWGV…DPVR and KTNY…EDSN. Over residues 1326–1335 the composition is skewed to pro residues; sequence APPPPPPPMP. Low complexity predominate over residues 1336 to 1358; the sequence is SSNYYRNNPNQQQRNYQQRSSYP. Over residues 1405-1414 the composition is skewed to basic and acidic residues; it reads NNRRGSDSGD. The segment covering 1449–1463 has biased composition (polar residues); the sequence is FGQQQRAPTLRQSPA.

In the C-terminal section; belongs to the TRAFAC class myosin-kinesin ATPase superfamily. Myosin family. This sequence in the N-terminal section; belongs to the protein kinase superfamily. Ser/Thr protein kinase family. Interacts with rtp. As to expression, expressed in the phototransducing compartment of photoreceptor cells, the rhabdomeres (at protein level).

It localises to the cytoplasm. The protein localises to the cytoskeleton. The protein resides in the nucleus. Its subcellular location is the membrane. It is found in the cell projection. It localises to the rhabdomere membrane. The enzyme catalyses L-seryl-[protein] + ATP = O-phospho-L-seryl-[protein] + ADP + H(+). It catalyses the reaction L-threonyl-[protein] + ATP = O-phospho-L-threonyl-[protein] + ADP + H(+). Required for photoreceptor cell function. The ninaC proteins combines putative serine/threonine-protein kinase and myosin activities. Essential for the expression and stability of the rtp protein in the photoreceptors. The rtp/ninaC complex is required for stability of inad and inac and the normal termination of phototransduction in the retina. In Drosophila melanogaster (Fruit fly), this protein is Neither inactivation nor afterpotential protein C (ninaC).